The chain runs to 85 residues: MAHKKAGGSTRNGRDSEAKRMGVKRFGGESVLAGSIIVRQRGTKFHAGANVGYGRDHTRFAKADGKVKFEVKGPKNRKFISIEAE.

The disordered stretch occupies residues 1-22; that stretch reads MAHKKAGGSTRNGRDSEAKRMG.

This sequence belongs to the bacterial ribosomal protein bL27 family.

The polypeptide is Large ribosomal subunit protein bL27 (Escherichia coli O6:K15:H31 (strain 536 / UPEC)).